A 258-amino-acid chain; its full sequence is Imidazole glycerol phosphate synthase subunit HisF (258 aa).

Active-site residues include aspartate 11 and aspartate 130.

Belongs to the HisA/HisF family. As to quaternary structure, heterodimer of HisH and HisF.

It is found in the cytoplasm. It catalyses the reaction 5-[(5-phospho-1-deoxy-D-ribulos-1-ylimino)methylamino]-1-(5-phospho-beta-D-ribosyl)imidazole-4-carboxamide + L-glutamine = D-erythro-1-(imidazol-4-yl)glycerol 3-phosphate + 5-amino-1-(5-phospho-beta-D-ribosyl)imidazole-4-carboxamide + L-glutamate + H(+). The protein operates within amino-acid biosynthesis; L-histidine biosynthesis; L-histidine from 5-phospho-alpha-D-ribose 1-diphosphate: step 5/9. Functionally, IGPS catalyzes the conversion of PRFAR and glutamine to IGP, AICAR and glutamate. The HisF subunit catalyzes the cyclization activity that produces IGP and AICAR from PRFAR using the ammonia provided by the HisH subunit. The polypeptide is Imidazole glycerol phosphate synthase subunit HisF (Xanthobacter autotrophicus (strain ATCC BAA-1158 / Py2)).